The chain runs to 449 residues: Procollagen C-endopeptidase enhancer 1 (449 aa).

A signal peptide spans 1–25 (MLPAATASLLGPLLTACALLPFAQG). N29 carries an N-linked (GlcNAc...) asparagine glycan. Intrachain disulfides connect C37–C63, C90–C112, C159–C186, C213–C236, C318–C386, C322–C389, and C333–C437. 2 CUB domains span residues 37 to 149 (CGGD…YSGR) and 159 to 273 (CGGR…YKTL). S50 carries the post-translational modification Phosphoserine. Residues 271-321 (KTLPRGTAKEGQGPGPKRGTEPKVKLPPKSQPPEKTEESPSAPDAPTCPKQ) form a disordered region. Residues 318–437 (CPKQCRRTGT…ILTNLSKRKC (120 aa)) form the NTR domain. The N-linked (GlcNAc...) asparagine glycan is linked to N431.

In terms of assembly, interacts with EFEMP2. In terms of processing, C-terminally processed at multiple positions.

Its subcellular location is the secreted. Its function is as follows. Binds to the C-terminal propeptide of type I procollagen and enhances procollagen C-proteinase activity. C-terminal processed part of PCPE (CT-PCPE) may have an metalloproteinase inhibitory activity. The sequence is that of Procollagen C-endopeptidase enhancer 1 (PCOLCE) from Homo sapiens (Human).